We begin with the raw amino-acid sequence, 293 residues long: Ribonuclease HIII (293 aa).

Residues 78–293 (LPLIGTDEVG…TEKAKKRLER (216 aa)) form the RNase H type-2 domain. A divalent metal cation contacts are provided by D84, E85, and D187.

It belongs to the RNase HII family. RnhC subfamily. It depends on Mn(2+) as a cofactor. Mg(2+) serves as cofactor.

It localises to the cytoplasm. The enzyme catalyses Endonucleolytic cleavage to 5'-phosphomonoester.. In terms of biological role, endonuclease that specifically degrades the RNA of RNA-DNA hybrids. The polypeptide is Ribonuclease HIII (rnhC) (Streptococcus pneumoniae serotype 4 (strain ATCC BAA-334 / TIGR4)).